The following is a 341-amino-acid chain: Solute carrier family 25 member 43 (341 aa).

Solcar repeat units lie at residues 11–101 (TGGQ…TDDL), 105–185 (SQWS…LLVY), and 200–298 (SLPQ…LYQN). Helical transmembrane passes span 16–36 (LLCAGLAGTLSLSLTAPLELA), 68–88 (LWKGNAVACLRLFPCSAVQLA), 110–130 (IMAGSLAGMVSTIVTYPTDLI), 166–186 (GVSLTVVGALPFSAGSLLVYM), 205–225 (FANVCLAAAVTQTLSFPFETV), and 262–282 (VLGLWNGLTANLLKIVPYFGI).

It belongs to the mitochondrial carrier (TC 2.A.29) family.

The protein resides in the mitochondrion inner membrane. This Homo sapiens (Human) protein is Solute carrier family 25 member 43 (SLC25A43).